The chain runs to 310 residues: Vomeronasal type-1 receptor 50 (310 aa).

Topologically, residues 1–16 (MSKANLLHTDNNMKIT) are extracellular. A helical membrane pass occupies residues 17-37 (LFSEVSVGISANSILFVVHLC). The Cytoplasmic portion of the chain corresponds to 38-50 (KLLHENKPKPIDL). The helical transmembrane segment at 51 to 71 (YIAFFSITQLMLLITMGLIAV) threads the bilayer. Residues 72–93 (DMFMPWGRWDSTTCQSLIYLHR) lie on the Extracellular side of the membrane. A disulfide bridge connects residues cysteine 85 and cysteine 172. A helical transmembrane segment spans residues 94–114 (LLRGLTFCATCLLNVLWTITL). Residues 115-134 (SPRSSCLTKFKHKSPHHISG) are Cytoplasmic-facing. The helical transmembrane segment at 135 to 155 (AFLFFCVLYMSFSSHLLVSII) threads the bilayer. Topologically, residues 156–193 (ATFNSTSDNFLYVTQSCSILPVSYSRTSILSTMMTMRE) are extracellular. N-linked (GlcNAc...) asparagine glycosylation occurs at asparagine 159. The helical transmembrane segment at 194–214 (AFLIGLMALSSGYVVVLLWRH) threads the bilayer. At 215 to 237 (KKQARHLHSTSLSSKASPEQRAT) the chain is on the cytoplasmic side. A helical membrane pass occupies residues 238–258 (STIMLLMGFFVVLYILDTVIF). Topologically, residues 259-269 (QARLKFKDVST) are extracellular. The helical transmembrane segment at 270 to 290 (FFCVKIIISHSYATFSPFVFI) threads the bilayer. Residues 291–310 (CNDKYMIKFVTSMCGRIVNV) are Cytoplasmic-facing.

Belongs to the G-protein coupled receptor 1 family. As to expression, expressed in a subset of sensory neurons located in the apical layer of the vomeronasal organ.

Its subcellular location is the cell membrane. Its function is as follows. Putative pheromone receptor implicated in the regulation of social and reproductive behavior. This chain is Vomeronasal type-1 receptor 50 (Vmn1r50), found in Mus musculus (Mouse).